The primary structure comprises 612 residues: Calcium-dependent protein kinase 27 (612 aa).

Gly2 is lipidated: N-myristoyl glycine. A disordered region spans residues 23 to 132 (PRHAAPSSPS…AHIKRISSAG (110 aa)). A compositionally biased stretch (low complexity) spans 28 to 50 (PSSPSQPTTTSRSIPVVLPSAPS). The segment covering 51-100 (SKPPPPTQTAPPVPVVISEPPPPQPQPEPQPAAPSQPPPPQEQPSPPPPA) has biased composition (pro residues). Over residues 117–127 (SRAKKPAHIKR) the composition is skewed to basic residues. The Protein kinase domain occupies 150 to 408 (YSLGRKLGQG…AHEVLCHPWL (259 aa)). Residues 156–164 (LGQGQFGTT) and Lys179 contribute to the ATP site. Catalysis depends on Asp274, which acts as the Proton acceptor. Residues 414 to 444 (APDKPLDSAVLSRLRQFSAMNKLKKMALRVI) form an autoinhibitory domain region. EF-hand domains are found at residues 451 to 486 (EEIAGLKEMFKMMDTDNSGQINYEELKAGLERVGAN), 487 to 522 (MKESEIYQLMQAADIDNSGTIDYGEFIAATLHLNKV), 523 to 558 (EREDHLYAAFQYFDKDGSGYITSDELQQACDEFGIE), and 561 to 592 (RLEDMIGEVDQDNDGRIDYNEFVAMMQKTTTG). Ca(2+) is bound by residues Asp464, Asp466, Ser468, Gln470, Glu475, Asp500, Asp502, Ser504, Thr506, Glu511, Asp536, Asp538, Ser540, Tyr542, Glu547, Asp570, Asp572, Asp574, Arg576, and Glu581.

Belongs to the protein kinase superfamily. Ser/Thr protein kinase family. CDPK subfamily.

Its subcellular location is the membrane. It catalyses the reaction L-seryl-[protein] + ATP = O-phospho-L-seryl-[protein] + ADP + H(+). The catalysed reaction is L-threonyl-[protein] + ATP = O-phospho-L-threonyl-[protein] + ADP + H(+). Its activity is regulated as follows. Activated by calcium. Autophosphorylation may play an important role in the regulation of the kinase activity. May play a role in signal transduction pathways that involve calcium as a second messenger. The chain is Calcium-dependent protein kinase 27 from Oryza sativa subsp. japonica (Rice).